Here is a 331-residue protein sequence, read N- to C-terminus: UPF0194 membrane protein YbhG (331 aa).

The first 19 residues, 1 to 19 (MKKPVVIGLAIAAIVAVIA), serve as a signal peptide directing secretion. Residues 107–208 (EEIAQAAAAV…LDLQDTTLIA (102 aa)) adopt a coiled-coil conformation.

The protein belongs to the UPF0194 family.

The protein localises to the periplasm. The chain is UPF0194 membrane protein YbhG from Salmonella paratyphi A (strain ATCC 9150 / SARB42).